Consider the following 405-residue polypeptide: Teichoic acid D-alanyltransferase (405 aa).

The Extracellular portion of the chain corresponds to 1-9; sequence MLNLQPYEN. A helical membrane pass occupies residues 10–29; that stretch reads PQYFVYLIIALLPVIIGMFK. At 30 to 33 the chain is on the cytoplasmic side; that stretch reads GFRM. A helical membrane pass occupies residues 34 to 49; it reads HWYESIFSLVFLVLIF. Over 50–53 the chain is Extracellular; sequence DADK. A helical membrane pass occupies residues 54-80; sequence WPQGKALLGYVVFNLLLVYAYFKYRTR. Topologically, residues 81-86 are cytoplasmic; it reads EGSKNS. Residues 87–111 form a helical membrane-spanning segment; sequence TAVFYLSVALGIAHVAVVKFTPLFQ. Over 112–121 the chain is Extracellular; sequence HHGSILGFLG. Residues 122-138 form a helical membrane-spanning segment; the sequence is ISYLTFRVVGTIMEIRD. Residues 139-145 are Cytoplasmic-facing; that stretch reads GSIKDLN. The stretch at 146 to 175 is an intramembrane region; the sequence is MWKFIQFLLFFPTISSGPIDRYRRFVKDYD. The Cytoplasmic segment spans residues 176-179; that stretch reads RVPD. A helical membrane pass occupies residues 180-223; sequence PEHYAQLVTKAIHYLMLGFLYKFILGYIFGTLWLPSVEHMAMAS. The Extracellular segment spans residues 224 to 232; the sequence is RGGAFLGLS. Residues 233 to 264 form a helical membrane-spanning segment; that stretch reads WPVVGVMYAYSGYLFFDFAGYSLFAVAISYLM. The Cytoplasmic segment spans residues 265–274; sequence GIETPMNFNK. An intramembrane segment occupies 275-310; sequence PWSHITSRLLNRWQLSLSFWFRDYIYMRFVFFMMKH. Over 311 to 315 the chain is Cytoplasmic; that stretch reads KWIKS. Residues 316 to 335 traverse the membrane as a helical segment; it reads RVWTAFVGYLVLFLIMGIWH. The active site involves H335. The Extracellular segment spans residues 336 to 338; it reads GET. The chain crosses the membrane as a helical span at residues 339-372; that stretch reads WYYIVYGLFHAMLINLTDAWLRFKKKHKDFFPHN. Over 373–378 the chain is Cytoplasmic; sequence RATHYP. Residues 379–399 form a helical membrane-spanning segment; that stretch reads SPFSMTANAVCFSFLIFSGFL. The Extracellular segment spans residues 400 to 405; that stretch reads DKLWFH.

Belongs to the membrane-bound acyltransferase family.

Its subcellular location is the cell membrane. The protein operates within cell wall biogenesis; lipoteichoic acid biosynthesis. Functionally, O-acyltransferase that catalyzes D-alanylation of both teichoic acid and lipoteichoic acid (LTA). D-alanylation of LTA plays an important role in modulating the properties of the cell wall in Gram-positive bacteria, influencing the net charge of the cell wall. Catalyzes D-alanylation from DltC carrier protein. This Lacticaseibacillus rhamnosus (Lactobacillus rhamnosus) protein is Teichoic acid D-alanyltransferase.